A 161-amino-acid chain; its full sequence is Cyclic pyranopterin monophosphate synthase (161 aa).

Substrate is bound by residues 75–77 (LCH) and 113–114 (ME). Residue D128 is part of the active site.

The protein belongs to the MoaC family. Homohexamer; trimer of dimers.

The catalysed reaction is (8S)-3',8-cyclo-7,8-dihydroguanosine 5'-triphosphate = cyclic pyranopterin phosphate + diphosphate. The protein operates within cofactor biosynthesis; molybdopterin biosynthesis. In terms of biological role, catalyzes the conversion of (8S)-3',8-cyclo-7,8-dihydroguanosine 5'-triphosphate to cyclic pyranopterin monophosphate (cPMP). This is Cyclic pyranopterin monophosphate synthase from Thioalkalivibrio sulfidiphilus (strain HL-EbGR7).